The sequence spans 117 residues: Large ribosomal subunit protein uL18 (117 aa).

This sequence belongs to the universal ribosomal protein uL18 family. As to quaternary structure, part of the 50S ribosomal subunit; part of the 5S rRNA/L5/L18/L25 subcomplex. Contacts the 5S and 23S rRNAs.

Functionally, this is one of the proteins that bind and probably mediate the attachment of the 5S RNA into the large ribosomal subunit, where it forms part of the central protuberance. This Acidithiobacillus ferrooxidans (strain ATCC 23270 / DSM 14882 / CIP 104768 / NCIMB 8455) (Ferrobacillus ferrooxidans (strain ATCC 23270)) protein is Large ribosomal subunit protein uL18.